A 732-amino-acid polypeptide reads, in one-letter code: Glycine--tRNA ligase (732 aa).

Residues 1–27 (MRHVLSLVYKCSVFSKQVTVFSNHLRL) constitute a mitochondrion transit peptide. The 57-residue stretch at 61–117 (ILAPLRANVKEQGDLVRKLKEEKAPEIDIKKAVAELKTRKKILEDKELSLAPAEDLF) folds into the WHEP-TRS domain. Glu297 lines the glycine pocket. ATP-binding positions include 329–331 (RNE) and 340–341 (RV). Glycine is bound at residue Glu348. 453-454 (EC) serves as a coordination point for ATP. 572–574 (EPS) serves as a coordination point for glycine. Residue Arg579 coordinates ATP.

The protein belongs to the class-II aminoacyl-tRNA synthetase family. As to quaternary structure, homodimer.

It is found in the mitochondrion. The protein resides in the cytoplasm. The protein localises to the cell projection. Its subcellular location is the axon. The enzyme catalyses tRNA(Gly) + glycine + ATP = glycyl-tRNA(Gly) + AMP + diphosphate. The catalysed reaction is 2 ATP + H(+) = P(1),P(4)-bis(5'-adenosyl) tetraphosphate + diphosphate. Catalyzes the ATP-dependent ligation of glycine to the 3'-end of its cognate tRNA, via the formation of an aminoacyl-adenylate intermediate (Gly-AMP). Also produces diadenosine tetraphosphate (Ap4A), a universal pleiotropic signaling molecule needed for cell regulation pathways, by direct condensation of 2 ATPs. Thereby, may play a special role in Ap4A homeostasis. Required for terminal arborization of both dendrites and axons during development. The sequence is that of Glycine--tRNA ligase from Bombyx mori (Silk moth).